The following is a 351-amino-acid chain: UDP-N-acetylglucosamine--N-acetylmuramyl-(pentapeptide) pyrophosphoryl-undecaprenol N-acetylglucosamine transferase (351 aa).

Residues 13-15 (TGG), N125, R161, S189, I241, 260-265 (ALTVCE), and Q285 contribute to the UDP-N-acetyl-alpha-D-glucosamine site.

It belongs to the glycosyltransferase 28 family. MurG subfamily.

Its subcellular location is the cell inner membrane. The catalysed reaction is di-trans,octa-cis-undecaprenyl diphospho-N-acetyl-alpha-D-muramoyl-L-alanyl-D-glutamyl-meso-2,6-diaminopimeloyl-D-alanyl-D-alanine + UDP-N-acetyl-alpha-D-glucosamine = di-trans,octa-cis-undecaprenyl diphospho-[N-acetyl-alpha-D-glucosaminyl-(1-&gt;4)]-N-acetyl-alpha-D-muramoyl-L-alanyl-D-glutamyl-meso-2,6-diaminopimeloyl-D-alanyl-D-alanine + UDP + H(+). It functions in the pathway cell wall biogenesis; peptidoglycan biosynthesis. Cell wall formation. Catalyzes the transfer of a GlcNAc subunit on undecaprenyl-pyrophosphoryl-MurNAc-pentapeptide (lipid intermediate I) to form undecaprenyl-pyrophosphoryl-MurNAc-(pentapeptide)GlcNAc (lipid intermediate II). The polypeptide is UDP-N-acetylglucosamine--N-acetylmuramyl-(pentapeptide) pyrophosphoryl-undecaprenol N-acetylglucosamine transferase (Haemophilus influenzae (strain PittGG)).